The sequence spans 408 residues: RNA-splicing ligase RtcB1 (408 aa).

Residues aspartate 75, cysteine 78, histidine 168, histidine 185, and histidine 281 each contribute to the Mn(2+) site. 167–171 contributes to the GMP binding site; sequence NHFIE. GMP is bound by residues 281 to 282, 313 to 316, serine 320, 337 to 340, and lysine 407; these read HN, PGSM, and HGAG. Catalysis depends on histidine 337, which acts as the GMP-histidine intermediate.

Belongs to the RtcB family. As to quaternary structure, monomer. Requires Mn(2+) as cofactor.

It carries out the reaction a 3'-end 3'-phospho-ribonucleotide-RNA + a 5'-end dephospho-ribonucleoside-RNA + GTP = a ribonucleotidyl-ribonucleotide-RNA + GMP + diphosphate. The catalysed reaction is a 3'-end 2',3'-cyclophospho-ribonucleotide-RNA + a 5'-end dephospho-ribonucleoside-RNA + GTP + H2O = a ribonucleotidyl-ribonucleotide-RNA + GMP + diphosphate + H(+). In terms of biological role, GTP-dependent RNA ligase that is involved in RNA repair. Joins RNA with 2',3'-cyclic-phosphate or 3'-phosphate ends to RNA with 5'-hydroxy ends. GTP-dependent RNA ligase that is involved in tRNA repair. Repairs broken tRNA(Asp) and tRNA(Arg) that have been cleaved by colicin E5 or colicin D, respectively. Does not repair damaged 16S rRNA in 30S ribosomal subunits. In Escherichia coli (strain ATCC 25922 / DSM 1103 / LMG 8223 / NCIMB 12210 / NCTC 12241 / WDCM 00013 / Seattle 1946), this protein is RNA-splicing ligase RtcB1.